The sequence spans 101 residues: Urease subunit beta (101 aa).

It belongs to the urease beta subunit family. In terms of assembly, heterotrimer of UreA (gamma), UreB (beta) and UreC (alpha) subunits. Three heterotrimers associate to form the active enzyme.

The protein resides in the cytoplasm. The enzyme catalyses urea + 2 H2O + H(+) = hydrogencarbonate + 2 NH4(+). The protein operates within nitrogen metabolism; urea degradation; CO(2) and NH(3) from urea (urease route): step 1/1. The polypeptide is Urease subunit beta (Burkholderia orbicola (strain MC0-3)).